A 73-amino-acid polypeptide reads, in one-letter code: MKSFYHYLMKYRHPKPKDAISEFANHAYLDHGFPKASTHYDEISSYLELNGDYLSSMTTFDEAWERYISETKR.

The protein belongs to the UPF0346 family.

The protein is UPF0346 protein BLi02292/BL01432 of Bacillus licheniformis (strain ATCC 14580 / DSM 13 / JCM 2505 / CCUG 7422 / NBRC 12200 / NCIMB 9375 / NCTC 10341 / NRRL NRS-1264 / Gibson 46).